Here is a 352-residue protein sequence, read N- to C-terminus: Ion-translocating oxidoreductase complex subunit D (352 aa).

Helical transmembrane passes span 20 to 40 (IMLLVLLAAVPGIAAQLWFFG), 42 to 62 (GTLVQILLASVSALLAEALVL), 78 to 109 (ALLTGLLLAVSIPPLAPWWMVVLGTVFAVIIA), 123 to 143 (PAMIGYVVLLISFPVQMTSWL), and 148 to 168 (IAVNIPGFIDAIQVIFSGHTA). FMN phosphoryl threonine is present on threonine 187. A run of 5 helical transmembrane segments spans residues 214–234 (ILAGAGWQWVNLAWLAGGVWL), 242–262 (WHIPLSFLVTLALCATLGWLF), 267–287 (LAAPQIHLLSGATMLGAFFIL), 301–321 (LIFGALAGLLVWMIRSFGGYP), and 322–342 (DGVAFAVLLANITVPLIDYYT).

This sequence belongs to the NqrB/RnfD family. In terms of assembly, the complex is composed of six subunits: RsxA, RsxB, RsxC, RsxD, RsxE and RsxG. Requires FMN as cofactor.

The protein resides in the cell inner membrane. Functionally, part of a membrane-bound complex that couples electron transfer with translocation of ions across the membrane. Required to maintain the reduced state of SoxR. The protein is Ion-translocating oxidoreductase complex subunit D of Escherichia coli O6:K15:H31 (strain 536 / UPEC).